Reading from the N-terminus, the 357-residue chain is Cyclin-dependent kinase-like 1 (357 aa).

Residues 4 to 287 (YEKIGKIGEG…CEQLLHHPYF (284 aa)) enclose the Protein kinase domain. Residues 10 to 18 (IGEGSYGVV) and Lys-33 each bind ATP. A [NKR]KIAxRE motif is present at residues 45-51 (KKIALRE). Residue Asp-126 is the Proton acceptor of the active site.

The protein belongs to the protein kinase superfamily. CMGC Ser/Thr protein kinase family. CDC2/CDKX subfamily. Highly expressed in kidney, and to a lower extent in ovary.

The protein resides in the cytoplasm. It localises to the nucleus. The catalysed reaction is L-seryl-[protein] + ATP = O-phospho-L-seryl-[protein] + ADP + H(+). It catalyses the reaction L-threonyl-[protein] + ATP = O-phospho-L-threonyl-[protein] + ADP + H(+). In Homo sapiens (Human), this protein is Cyclin-dependent kinase-like 1.